Consider the following 1030-residue polypeptide: Protein phosphatase 1 regulatory subunit 12A (1030 aa).

A KVKF motif motif is present at residues Lys-35–Phe-38. 6 ANK repeats span residues Asp-39–Tyr-68, Asp-72–Gln-101, Glu-105–Ala-134, Glu-138–Val-164, Ser-198–Ile-227, and Asp-231–Met-260. 2 positions are modified to (3S)-3-hydroxyasparagine; by HIF1AN; partial: Asn-67 and Asn-100. Residue Asn-226 is modified to (3S)-3-hydroxyasparagine; by HIF1AN; partial. Disordered regions lie at residues Leu-290–Thr-628 and Ala-643–Asp-928. Basic and acidic residues predominate over residues His-291–Pro-300. Residue Ser-299 is modified to Phosphoserine. Polar residues predominate over residues Ile-302–Thr-316. A compositionally biased stretch (basic and acidic residues) spans Lys-318–Glu-340. The span at Ser-357–Ala-369 shows a compositional bias: acidic residues. Positions Thr-385–Ser-402 are enriched in low complexity. Ser-422 and Ser-432 each carry phosphoserine. Residues Ser-422 to Ser-432 show a composition bias toward basic and acidic residues. At Thr-443 the chain carries Phosphothreonine. Ser-445 carries the phosphoserine; by NUAK1 modification. Tyr-446 is subject to Phosphotyrosine. Over residues Arg-469–Leu-480 the composition is skewed to low complexity. Position 472 is a phosphoserine; by NUAK1 (Ser-472). Position 473 is a phosphoserine; by CDK1 (Ser-473). Ser-477 is subject to Phosphoserine. Residues Asp-481 to Gly-491 show a composition bias toward basic and acidic residues. Ser-507 and Ser-509 each carry phosphoserine. A compositionally biased stretch (polar residues) spans Asn-540 to Lys-551. Residues Ser-564 to Ser-610 show a composition bias toward low complexity. Phosphoserine is present on residues Ser-601 and Ser-618. Positions Trp-614–Ser-625 are enriched in basic and acidic residues. Residues Ala-643–Thr-660 are compositionally biased toward low complexity. Positions Val-673–Arg-682 are enriched in basic and acidic residues. The interaction with ROCK2 stretch occupies residues Arg-682 to Glu-864. Residues Lys-683–Arg-693 are compositionally biased toward basic residues. 2 positions are modified to phosphoserine; by PKA and PKG; in vitro: Ser-692 and Ser-695. Thr-696 is subject to Phosphothreonine; by ROCK1, ROCK2, CDC42BP, ZIPK/DAPK3 and RAF1. Positions Arg-718–Gln-767 are enriched in basic and acidic residues. Over residues Ser-773–Ser-795 the composition is skewed to low complexity. Over residues Gln-796–Tyr-810 the composition is skewed to polar residues. Ser-802 is modified (phosphoserine). The span at Ile-814–Ile-840 shows a compositional bias: basic and acidic residues. The span at Arg-841–Ser-852 shows a compositional bias: basic residues. Ser-852 is modified (phosphoserine; by ROCK2). A compositionally biased stretch (acidic residues) spans Asp-861 to Glu-875. A phosphoserine mark is found at Ser-862 and Ser-871. A compositionally biased stretch (polar residues) spans Thr-884–Ala-897. Phosphoserine is present on residues Ser-903 and Ser-908. Positions Ser-903–Tyr-913 are enriched in low complexity. Residue Ser-910 is modified to Phosphoserine; by NUAK1. Residues Leu-914–Asp-928 show a composition bias toward basic and acidic residues. Position 995 is a phosphoserine (Ser-995).

In terms of assembly, PP1 comprises a catalytic subunit, PPP1CA, PPP1CB or PPP1CC, and one or several targeting or regulatory subunits. PPP1R12A mediates binding to myosin. Interacts with ARHA and CIT. Binds PPP1R12B, ROCK1 and IL16. Interacts directly with PRKG1. Non-covalent dimer of 2 dimers; PRKG1-PRKG1 and PPP1R12A-PPP1R12A. Interacts with SMTNL1. Interacts with PPP1CB; the interaction is direct. Interacts (when phosphorylated at Ser-445, Ser-472 and Ser-910) with 14-3-3. Interacts with ROCK1 and ROCK2. Interacts with isoform 1 and isoform 2 of ZIPK/DAPK3. Interacts with RAF1. Interacts with HIF1AN. Interacts with NCKAP1L. Post-translationally, phosphorylated by CIT (Rho-associated kinase). Phosphorylated cooperatively by ROCK1 and CDC42BP on Thr-696. Phosphorylated on upon DNA damage, probably by ATM or ATR. In vitro, phosphorylation of Ser-695 by PKA and PKG appears to prevent phosphorylation of the inhibitory site Thr-696, probably mediated by PRKG1. Phosphorylation at Ser-445, Ser-472 and Ser-910 by NUAK1 promotes interaction with 14-3-3, leading to inhibit interaction with myosin light chain MLC2, preventing dephosphorylation of MLC2. May be phosphorylated at Thr-696 by DMPK; may inhibit the myosin phosphatase activity. Phosphorylated at Ser-473 by CDK1 during mitosis, creating docking sites for the POLO box domains of PLK1. Subsequently, PLK1 binds and phosphorylates PPP1R12A. In terms of tissue distribution, expressed in striated muscles, specifically in type 2a fibers (at protein level).

The protein resides in the cytoplasm. It localises to the cytoskeleton. It is found in the stress fiber. Key regulator of protein phosphatase 1C (PPP1C). Mediates binding to myosin. As part of the PPP1C complex, involved in dephosphorylation of PLK1. Capable of inhibiting HIF1AN-dependent suppression of HIF1A activity. The sequence is that of Protein phosphatase 1 regulatory subunit 12A from Homo sapiens (Human).